The following is a 380-amino-acid chain: Glucose-1-phosphate adenylyltransferase (380 aa).

Residues G164, E179–K180, and S190 each bind alpha-D-glucose 1-phosphate.

The protein belongs to the bacterial/plant glucose-1-phosphate adenylyltransferase family. Homotetramer.

The catalysed reaction is alpha-D-glucose 1-phosphate + ATP + H(+) = ADP-alpha-D-glucose + diphosphate. It functions in the pathway glycan biosynthesis; glycogen biosynthesis. In terms of biological role, involved in the biosynthesis of ADP-glucose, a building block required for the elongation reactions to produce glycogen. Catalyzes the reaction between ATP and alpha-D-glucose 1-phosphate (G1P) to produce pyrophosphate and ADP-Glc. The polypeptide is Glucose-1-phosphate adenylyltransferase (Ligilactobacillus salivarius (strain UCC118) (Lactobacillus salivarius)).